An 887-amino-acid polypeptide reads, in one-letter code: Alanine--tRNA ligase (887 aa).

Zn(2+)-binding residues include His564, His568, Cys675, and His679. Over residues 851-866 (GQGGGGRPDMAQGGGP) the composition is skewed to gly residues. The disordered stretch occupies residues 851–871 (GQGGGGRPDMAQGGGPDGDKA).

It belongs to the class-II aminoacyl-tRNA synthetase family. Requires Zn(2+) as cofactor.

It localises to the cytoplasm. The enzyme catalyses tRNA(Ala) + L-alanine + ATP = L-alanyl-tRNA(Ala) + AMP + diphosphate. Functionally, catalyzes the attachment of alanine to tRNA(Ala) in a two-step reaction: alanine is first activated by ATP to form Ala-AMP and then transferred to the acceptor end of tRNA(Ala). Also edits incorrectly charged Ser-tRNA(Ala) and Gly-tRNA(Ala) via its editing domain. In Rhizorhabdus wittichii (strain DSM 6014 / CCUG 31198 / JCM 15750 / NBRC 105917 / EY 4224 / RW1) (Sphingomonas wittichii), this protein is Alanine--tRNA ligase.